Here is a 262-residue protein sequence, read N- to C-terminus: Global transcriptional regulator CodY (262 aa).

The GAF domain stretch occupies residues 1 to 159 (MAHLLEKTRK…ASTVVGIQLL (159 aa)). The segment at residues 207 to 226 (ASVIADRIGITRSVIVNALR) is a DNA-binding region (H-T-H motif).

The protein belongs to the CodY family.

The protein localises to the cytoplasm. Its function is as follows. DNA-binding global transcriptional regulator which is involved in the adaptive response to starvation and acts by directly or indirectly controlling the expression of numerous genes in response to nutrient availability. During rapid exponential growth, CodY is highly active and represses genes whose products allow adaptation to nutrient depletion. The chain is Global transcriptional regulator CodY from Streptococcus pneumoniae (strain JJA).